The chain runs to 361 residues: POU domain, class 3, transcription factor 4 (361 aa).

Disordered regions lie at residues 99–131 (PHVA…GQPL) and 144–192 (MLEH…PTSD). The segment covering 119-131 (APNSSITSSGQPL) has biased composition (polar residues). Residues 165–183 (VLREPPDHGELGSHHCQDH) show a composition bias toward basic and acidic residues. The POU-specific domain occupies 186-260 (EETPTSDELE…LLNKWLEEAD (75 aa)). S265 is modified (phosphoserine). The homeobox DNA-binding region spans 278–337 (KRKKRTSIEVSVKGVLETHFLKCPKPAAQEISSLADSLQLEKEVVRVWFCNRRQKEKRMT). The tract at residues 334–361 (KRMTPPGDQQPHEVYSHTVKTDASCHDL) is disordered. A compositionally biased stretch (basic and acidic residues) spans 343–361 (QPHEVYSHTVKTDASCHDL).

It belongs to the POU transcription factor family. Class-3 subfamily. As to quaternary structure, interacts with HNRNPU. As to expression, brain specific.

The protein resides in the nucleus. Functionally, probable transcription factor which exert its primary action widely during early neural development and in a very limited set of neurons in the mature brain. The sequence is that of POU domain, class 3, transcription factor 4 (Pou3f4) from Mus musculus (Mouse).